Consider the following 163-residue polypeptide: SsrA-binding protein (163 aa).

The protein belongs to the SmpB family.

The protein resides in the cytoplasm. In terms of biological role, required for rescue of stalled ribosomes mediated by trans-translation. Binds to transfer-messenger RNA (tmRNA), required for stable association of tmRNA with ribosomes. tmRNA and SmpB together mimic tRNA shape, replacing the anticodon stem-loop with SmpB. tmRNA is encoded by the ssrA gene; the 2 termini fold to resemble tRNA(Ala) and it encodes a 'tag peptide', a short internal open reading frame. During trans-translation Ala-aminoacylated tmRNA acts like a tRNA, entering the A-site of stalled ribosomes, displacing the stalled mRNA. The ribosome then switches to translate the ORF on the tmRNA; the nascent peptide is terminated with the 'tag peptide' encoded by the tmRNA and targeted for degradation. The ribosome is freed to recommence translation, which seems to be the essential function of trans-translation. The protein is SsrA-binding protein of Shewanella sp. (strain ANA-3).